We begin with the raw amino-acid sequence, 231 residues long: L-ribulose-5-phosphate 4-epimerase (231 aa).

Substrate contacts are provided by residues 27 to 28, 44 to 45, and 73 to 74; these read GN, SG, and SS. Zn(2+)-binding residues include aspartate 75, histidine 94, and histidine 96. Aspartate 119 serves as the catalytic Proton donor/acceptor. Residue histidine 168 participates in Zn(2+) binding. Tyrosine 226 (proton donor/acceptor) is an active-site residue.

The protein belongs to the aldolase class II family. AraD/FucA subfamily. It depends on Zn(2+) as a cofactor.

The enzyme catalyses L-ribulose 5-phosphate = D-xylulose 5-phosphate. It functions in the pathway carbohydrate degradation; L-arabinose degradation via L-ribulose; D-xylulose 5-phosphate from L-arabinose (bacterial route): step 3/3. Functionally, involved in the degradation of L-arabinose. Catalyzes the interconversion of L-ribulose 5-phosphate (LRu5P) and D-xylulose 5-phosphate (D-Xu5P) via a retroaldol/aldol mechanism (carbon-carbon bond cleavage analogous to a class II aldolase reaction). The sequence is that of L-ribulose-5-phosphate 4-epimerase (araD) from Halalkalibacterium halodurans (strain ATCC BAA-125 / DSM 18197 / FERM 7344 / JCM 9153 / C-125) (Bacillus halodurans).